The sequence spans 224 residues: Steroid receptor RNA activator 1 (224 aa).

Disordered regions lie at residues 1 to 90 and 201 to 224; these read MAEL…EPTS and AANE…QQAS. S48, S57, and S75 each carry phosphoserine. Residues 58-76 are compositionally biased toward pro residues; the sequence is PGPPPMGPPPPSSKAPRSP. Basic and acidic residues predominate over residues 201–215; the sequence is AANEEKSAATAEKNH.

This sequence belongs to the SRA1 family. As to quaternary structure, SRA1 RNA exists in a ribonucleoprotein complex containing NCOA1. The RNA also forms a complex with PUS1 and RARG in the nucleus. Interacts with AR. As to expression, highly expressed in liver and skeletal muscle and to a lesser extent in brain. Also expressed in both normal and tumorigenic breast epithelial cell lines. Significantly up-regulated in human tumors of the breast, ovary, and uterus.

Its subcellular location is the nucleus. The protein resides in the cytoplasm. Its function is as follows. Functional RNA which acts as a transcriptional coactivator that selectively enhances steroid receptor-mediated transactivation ligand-independently through a mechanism involving the modulating N-terminal domain (AF-1) of steroid receptors. Also mediates transcriptional coactivation of steroid receptors ligand-dependently through the steroid-binding domain (AF-2). Enhances cellular proliferation and differentiation and promotes apoptosis in vivo. May play a role in tumorigenesis. This chain is Steroid receptor RNA activator 1, found in Homo sapiens (Human).